The sequence spans 365 residues: MNLAAMDPTTYDAQLTAKRIKLEQAFAQFETPSVEVFASEPAHYRMRAEFRIWHEGDDLYYYMFDKVLNDKVRCDQYLPASALINQMMAALIAELKPNHSLRHKLFQVDFLSTLSGEILVSLLYHRQLDDQWRSEAAALKARLSSQFKVNIIGRARKQKIDLDKDFVVESLQVNDKVFHYKQIENSFTQPNAKVAIKMLEWAIDVTQHSQGDLLELYCGNGNFSIALAQNFNRVLATELAKPSVDAAQYNIEVNNIDNLQIIRMSAEEFSDAMAKKRSFRRLEGIDLDSYVCNTIFVDPPRAGIDPATLELVQGYERILYISCNPDTLKDNLQQLNQTHKVTRFALFDQFPYTDHMETGVLLERR.

S-adenosyl-L-methionine-binding residues include Q189, Y217, N222, E238, and D298. Residue C323 is the Nucleophile of the active site. The Proton acceptor role is filled by E357.

The protein belongs to the class I-like SAM-binding methyltransferase superfamily. RNA M5U methyltransferase family. TrmA subfamily.

The catalysed reaction is uridine(54) in tRNA + S-adenosyl-L-methionine = 5-methyluridine(54) in tRNA + S-adenosyl-L-homocysteine + H(+). It catalyses the reaction uridine(341) in tmRNA + S-adenosyl-L-methionine = 5-methyluridine(341) in tmRNA + S-adenosyl-L-homocysteine + H(+). Functionally, dual-specificity methyltransferase that catalyzes the formation of 5-methyluridine at position 54 (m5U54) in all tRNAs, and that of position 341 (m5U341) in tmRNA (transfer-mRNA). The polypeptide is tRNA/tmRNA (uracil-C(5))-methyltransferase (Shewanella sp. (strain MR-4)).